An 880-amino-acid polypeptide reads, in one-letter code: uncharacterized protein (880 aa).

10 disordered regions span residues 101–149, 191–224, 240–273, 294–350, 425–446, 470–508, 536–561, 580–613, 682–713, and 844–880; these read KPIP…LRSE, PETS…ISTH, TTTT…PILK, NSNS…STTS, QPDS…ESQP, STST…SSSS, MESS…NDNS, APQS…NDDE, NTNT…NINN, and NSSG…KSEI. A coiled-coil region spans residues 113–147; the sequence is ISIKEKEKEKEKEKEKEKEKEKEKEKEMKSTINLR. Over residues 115–149 the composition is skewed to basic and acidic residues; it reads IKEKEKEKEKEKEKEKEKEKEKEKEMKSTINLRSE. 2 stretches are compositionally biased toward low complexity: residues 193–223 and 240–256; these read TSTP…SIST and TTTT…PSSS. Positions 257–271 are enriched in polar residues; it reads IAGITNPTSRSSSPI. Residues 294-332 are compositionally biased toward low complexity; the sequence is NSNSSSGGGNNNNKSISTPSSPIISRPITNKINNNNNNN. The span at 333-342 shows a compositional bias: polar residues; sequence QPQLHYNQPQ. The span at 536 to 548 shows a compositional bias: low complexity; sequence MESSTTTTLLSEN. A compositionally biased stretch (acidic residues) spans 589-613; the sequence is QPEDDPFFDFEDLSDDDDSNDNDDE. Low complexity predominate over residues 844–864; it reads NSSGSGNNSNDNSGSSSPSSS. Residues 865–880 are compositionally biased toward polar residues; sequence KTNTLNQQSICIKSEI.

This is an uncharacterized protein from Dictyostelium discoideum (Social amoeba).